The chain runs to 233 residues: Small ribosomal subunit protein uS3 (233 aa).

Residues 39–107 (VRQYLTKELA…PAQINIAEVR (69 aa)) form the KH type-2 domain.

This sequence belongs to the universal ribosomal protein uS3 family. As to quaternary structure, part of the 30S ribosomal subunit. Forms a tight complex with proteins S10 and S14.

Its function is as follows. Binds the lower part of the 30S subunit head. Binds mRNA in the 70S ribosome, positioning it for translation. The polypeptide is Small ribosomal subunit protein uS3 (Citrobacter koseri (strain ATCC BAA-895 / CDC 4225-83 / SGSC4696)).